A 950-amino-acid polypeptide reads, in one-letter code: Coiled-coil domain-containing protein 80 (950 aa).

An N-terminal signal peptide occupies residues 1–21 (MTWRMGPRFTMLLAMWLVCGS). 3 disordered regions span residues 28-64 (TIRGSHGGRKVPLVSPDSSRPARFLRHTGRSRGIERS), 88-119 (PTEPPARSDINGAAVRPEQRPAARGSPREMIR), and 289-609 (QVVA…QSPK). 2 stretches are compositionally biased toward basic and acidic residues: residues 104 to 119 (PEQRPAARGSPREMIR) and 308 to 317 (SEKKKEDPRR). Residues 348–374 (PRATTLPPAPATTVTRSTSRAVTVAAR) are compositionally biased toward low complexity. A compositionally biased stretch (polar residues) spans 376-385 (MTTTAFPTTQ). The segment covering 418 to 428 (SRKDQHRERPQ) has biased composition (basic and acidic residues). Over residues 435–454 (KATSLESFTNAPPTTISEPS) the composition is skewed to polar residues. Basic and acidic residues-rich tracts occupy residues 462–478 (RFRDNRMDRREHGHRDP), 487–499 (PAKEKPPKKKAQD), and 538–582 (KKHE…EKEK). Glycyl lysine isopeptide (Lys-Gly) (interchain with G-Cter in SUMO2) cross-links involve residues K545 and K548. A coiled-coil region spans residues 560–587 (DKLLKSEKQMKKSEKKSKQEKEKSKKKK). Polar residues predominate over residues 598–609 (KPTNKHFTQSPK).

Belongs to the CCDC80 family. As to quaternary structure, binds to various extracellular matrix proteins. Post-translationally, phosphorylated. As to expression, expressed in dermal papilla and dermal fibroblasts (at protein level). Expressed in heart, thymus, placenta, pancreas, colon, epithelium, spleen and osteoblasts.

The protein localises to the secreted. Its subcellular location is the extracellular space. The protein resides in the extracellular matrix. Promotes cell adhesion and matrix assembly. This Homo sapiens (Human) protein is Coiled-coil domain-containing protein 80 (CCDC80).